The sequence spans 100 residues: Suppressor of silencing 2b (100 aa).

The short motif at 22-27 is the Nuclear localization signal element; sequence KRRRRR.

This sequence belongs to the cucumovirus/ilarvirus protein 2b family. Homotetramer. Interacts with host AGO1; this interaction blocks AGO1 cleavage activity to attenuate RNA silencing and thus counter host defense. Interacts with host JAZ.

It localises to the host nucleus. Functionally, multifunctional protein that plays two independent roles: viral suppressor of host RNAi (VSR) and viral inducer of host attractiveness to insect vectors (VIA). Acts as a suppressor of RNA-mediated gene silencing, also known as post-transcriptional gene silencing (PTGS), a mechanism of plant viral defense that limits the accumulation of viral RNAs. May directly interfere with mobile silencing signaling. Also inhibits signal transduction by the phytohormone jasmonate, making the infected plant more attractive to aphids, which are the second host to play a role as a dissemination vector. Acts by binding to and inhibiting JAZ degradation in the host. The polypeptide is Suppressor of silencing 2b (Cucumis sativus (Cucumber)).